A 413-amino-acid chain; its full sequence is Serine/threonine transporter SstT (413 aa).

9 consecutive transmembrane segments (helical) span residues isoleucine 11–alanine 31, phenylalanine 43–leucine 63, isoleucine 82–phenylalanine 102, alanine 141–methionine 161, isoleucine 192–glycine 212, leucine 216–valine 236, methionine 298–isoleucine 318, alanine 339–isoleucine 359, and valine 363–threonine 383.

Belongs to the dicarboxylate/amino acid:cation symporter (DAACS) (TC 2.A.23) family.

It localises to the cell inner membrane. The catalysed reaction is L-serine(in) + Na(+)(in) = L-serine(out) + Na(+)(out). The enzyme catalyses L-threonine(in) + Na(+)(in) = L-threonine(out) + Na(+)(out). In terms of biological role, involved in the import of serine and threonine into the cell, with the concomitant import of sodium (symport system). This Shewanella frigidimarina (strain NCIMB 400) protein is Serine/threonine transporter SstT.